Reading from the N-terminus, the 213-residue chain is MGSNYIVIEGLEGAGKTTARDVVVETLEQLGIRNMIFTREPGGTQLAEKLRSLVLDIRSVGDEVITDKAEVLMFYAARVQLVETVIKPALAQGIWVIGDRHDLSTQAYQGGGRGIDQTMLATLRDAVLGDFRPDLTLYLDVTPEVGLKRARARGDLDRIEQESFDFFNRTRARYLELAAQDSRIRTIDATQPLDAVMRDIRATVTKWVQEQAA.

10-17 is a binding site for ATP; it reads GLEGAGKT.

Belongs to the thymidylate kinase family.

It carries out the reaction dTMP + ATP = dTDP + ADP. Phosphorylation of dTMP to form dTDP in both de novo and salvage pathways of dTTP synthesis. The sequence is that of Thymidylate kinase from Salmonella choleraesuis (strain SC-B67).